The chain runs to 428 residues: Serine--tRNA ligase (428 aa).

235–237 (TAE) lines the L-serine pocket. An ATP-binding site is contributed by 266-268 (RSE). Residue E289 coordinates L-serine. 353–356 (EISS) is an ATP binding site. S389 contributes to the L-serine binding site.

The protein belongs to the class-II aminoacyl-tRNA synthetase family. Type-1 seryl-tRNA synthetase subfamily. Homodimer. The tRNA molecule binds across the dimer.

It is found in the cytoplasm. It carries out the reaction tRNA(Ser) + L-serine + ATP = L-seryl-tRNA(Ser) + AMP + diphosphate + H(+). The catalysed reaction is tRNA(Sec) + L-serine + ATP = L-seryl-tRNA(Sec) + AMP + diphosphate + H(+). It participates in aminoacyl-tRNA biosynthesis; selenocysteinyl-tRNA(Sec) biosynthesis; L-seryl-tRNA(Sec) from L-serine and tRNA(Sec): step 1/1. Catalyzes the attachment of serine to tRNA(Ser). Is also able to aminoacylate tRNA(Sec) with serine, to form the misacylated tRNA L-seryl-tRNA(Sec), which will be further converted into selenocysteinyl-tRNA(Sec). The polypeptide is Serine--tRNA ligase (Shewanella amazonensis (strain ATCC BAA-1098 / SB2B)).